The following is a 470-amino-acid chain: Cysteine--tRNA ligase (470 aa).

Position 28 (Cys28) interacts with Zn(2+). The 'HIGH' region motif lies at 30–40 (PTVYNYIHIGN). Zn(2+)-binding residues include Cys212, His237, and Glu241. The 'KMSKS' region signature appears at 271–275 (KMSKS). ATP is bound at residue Lys274.

It belongs to the class-I aminoacyl-tRNA synthetase family. In terms of assembly, monomer. Zn(2+) serves as cofactor.

It localises to the cytoplasm. The catalysed reaction is tRNA(Cys) + L-cysteine + ATP = L-cysteinyl-tRNA(Cys) + AMP + diphosphate. The chain is Cysteine--tRNA ligase from Ligilactobacillus salivarius (strain UCC118) (Lactobacillus salivarius).